A 180-amino-acid polypeptide reads, in one-letter code: Large ribosomal subunit protein uL5 (180 aa).

Belongs to the universal ribosomal protein uL5 family. As to quaternary structure, part of the 50S ribosomal subunit; part of the 5S rRNA/L5/L18/L25 subcomplex. Contacts the 5S rRNA and the P site tRNA. Forms a bridge to the 30S subunit in the 70S ribosome.

Its function is as follows. This is one of the proteins that bind and probably mediate the attachment of the 5S RNA into the large ribosomal subunit, where it forms part of the central protuberance. In the 70S ribosome it contacts protein S13 of the 30S subunit (bridge B1b), connecting the 2 subunits; this bridge is implicated in subunit movement. Contacts the P site tRNA; the 5S rRNA and some of its associated proteins might help stabilize positioning of ribosome-bound tRNAs. The chain is Large ribosomal subunit protein uL5 from Cupriavidus metallidurans (strain ATCC 43123 / DSM 2839 / NBRC 102507 / CH34) (Ralstonia metallidurans).